Here is a 514-residue protein sequence, read N- to C-terminus: ATP synthase subunit alpha (514 aa).

170-177 is a binding site for ATP; the sequence is GDRQIGKT.

Belongs to the ATPase alpha/beta chains family. As to quaternary structure, F-type ATPases have 2 components, CF(1) - the catalytic core - and CF(0) - the membrane proton channel. CF(1) has five subunits: alpha(3), beta(3), gamma(1), delta(1), epsilon(1). CF(0) has three main subunits: a(1), b(2) and c(9-12). The alpha and beta chains form an alternating ring which encloses part of the gamma chain. CF(1) is attached to CF(0) by a central stalk formed by the gamma and epsilon chains, while a peripheral stalk is formed by the delta and b chains.

The protein resides in the cell inner membrane. The enzyme catalyses ATP + H2O + 4 H(+)(in) = ADP + phosphate + 5 H(+)(out). In terms of biological role, produces ATP from ADP in the presence of a proton gradient across the membrane. The alpha chain is a regulatory subunit. The polypeptide is ATP synthase subunit alpha (Marinobacter nauticus (strain ATCC 700491 / DSM 11845 / VT8) (Marinobacter aquaeolei)).